A 561-amino-acid polypeptide reads, in one-letter code: Putative transport protein YbjL (561 aa).

The next 5 membrane-spanning stretches (helical) occupy residues 8 to 28, 32 to 52, 66 to 86, 94 to 114, and 158 to 178; these read LLNG…LCLG, LGSV…LLGQ, FMLF…SIFF, MLAL…GKLF, and NLSL…IVGA. RCK C-terminal domains lie at 200–288 and 292–373; these read RGLD…SLRN and VFDR…RIGF. The next 5 membrane-spanning stretches (helical) occupy residues 383–403, 406–426, 447–467, 475–495, and 540–560; these read LLAF…TFQF, FSFG…LGFL, FGLM…ISNG, MLIA…LFGA, and AIAN…WPGL.

The protein belongs to the AAE transporter (TC 2.A.81) family. YbjL subfamily.

The protein localises to the cell membrane. In Salmonella gallinarum (strain 287/91 / NCTC 13346), this protein is Putative transport protein YbjL.